Consider the following 229-residue polypeptide: Cytochrome c oxidase subunit 2 (229 aa).

At 1–26 (MANWTQLGLQDASSPLMEELIYFHDY) the chain is on the mitochondrial intermembrane side. Residues 27–48 (TLIILTLITILVFYGLASLIVS) form a helical membrane-spanning segment. At 49–62 (SNTNRFFLEGQSLE) the chain is on the mitochondrial matrix side. The helical transmembrane segment at 63–82 (TIWTVIPAVILIFIALPSLQ) threads the bilayer. Residues 83-229 (LLYLIDEVNN…ENWVSNFLNE (147 aa)) lie on the Mitochondrial intermembrane side of the membrane. Positions 161, 196, 198, 200, 204, and 207 each coordinate Cu cation. Glutamate 198 is a Mg(2+) binding site.

Belongs to the cytochrome c oxidase subunit 2 family. In terms of assembly, component of the cytochrome c oxidase (complex IV, CIV), a multisubunit enzyme composed of a catalytic core of 3 subunits and several supernumerary subunits. The complex exists as a monomer or a dimer and forms supercomplexes (SCs) in the inner mitochondrial membrane with ubiquinol-cytochrome c oxidoreductase (cytochrome b-c1 complex, complex III, CIII). Cu cation is required as a cofactor.

It localises to the mitochondrion inner membrane. The catalysed reaction is 4 Fe(II)-[cytochrome c] + O2 + 8 H(+)(in) = 4 Fe(III)-[cytochrome c] + 2 H2O + 4 H(+)(out). Its function is as follows. Component of the cytochrome c oxidase, the last enzyme in the mitochondrial electron transport chain which drives oxidative phosphorylation. The respiratory chain contains 3 multisubunit complexes succinate dehydrogenase (complex II, CII), ubiquinol-cytochrome c oxidoreductase (cytochrome b-c1 complex, complex III, CIII) and cytochrome c oxidase (complex IV, CIV), that cooperate to transfer electrons derived from NADH and succinate to molecular oxygen, creating an electrochemical gradient over the inner membrane that drives transmembrane transport and the ATP synthase. Cytochrome c oxidase is the component of the respiratory chain that catalyzes the reduction of oxygen to water. Electrons originating from reduced cytochrome c in the intermembrane space (IMS) are transferred via the dinuclear copper A center (CU(A)) of subunit 2 and heme A of subunit 1 to the active site in subunit 1, a binuclear center (BNC) formed by heme A3 and copper B (CU(B)). The BNC reduces molecular oxygen to 2 water molecules using 4 electrons from cytochrome c in the IMS and 4 protons from the mitochondrial matrix. In Pisaster ochraceus (Ochre sea star), this protein is Cytochrome c oxidase subunit 2 (COII).